Reading from the N-terminus, the 382-residue chain is Lipid-A-disaccharide synthase (382 aa).

It belongs to the LpxB family.

The enzyme catalyses 2-N,3-O-bis[(3R)-3-hydroxytetradecanoyl]-alpha-D-glucosaminyl 1-phosphate + UDP-2-N,3-O-bis[(3R)-3-hydroxytetradecanoyl]-alpha-D-glucosamine = lipid A disaccharide (E. coli) + UDP + H(+). It catalyses the reaction a lipid X + a UDP-2-N,3-O-bis[(3R)-3-hydroxyacyl]-alpha-D-glucosamine = a lipid A disaccharide + UDP + H(+). Its pathway is glycolipid biosynthesis; lipid IV(A) biosynthesis; lipid IV(A) from (3R)-3-hydroxytetradecanoyl-[acyl-carrier-protein] and UDP-N-acetyl-alpha-D-glucosamine: step 5/6. In terms of biological role, condensation of UDP-2,3-diacylglucosamine and 2,3-diacylglucosamine-1-phosphate to form lipid A disaccharide, a precursor of lipid A, a phosphorylated glycolipid that anchors the lipopolysaccharide to the outer membrane of the cell. This chain is Lipid-A-disaccharide synthase, found in Salmonella heidelberg (strain SL476).